We begin with the raw amino-acid sequence, 432 residues long: Homeobox protein Hox-D3 (432 aa).

Disordered regions lie at residues 43 to 62 (YSTP…LDTD), 68 to 197 (CSIQ…SKRV), 253 to 280 (QKAK…AGHV), and 400 to 432 (HHGP…LTHL). The span at 97 to 106 (NSQGGGGGSQ) shows a compositional bias: gly residues. Positions 116 to 131 (PPQPPPPPPTLPPSSP) are enriched in pro residues. A compositionally biased stretch (polar residues) spans 148–158 (NASSSSATISK). The Antp-type hexapeptide motif lies at 160–165 (IFPWMK). The segment at residues 194–253 (SKRVRTAYTSAQLVELEKEFHFNRYLCRPRRVEMANLLNLTERQIKIWFQNRRMKYKKDQ) is a DNA-binding region (homeobox).

This sequence belongs to the Antp homeobox family.

The protein localises to the nucleus. Functionally, sequence-specific transcription factor which is part of a developmental regulatory system that provides cells with specific positional identities on the anterior-posterior axis. This Homo sapiens (Human) protein is Homeobox protein Hox-D3 (HOXD3).